A 481-amino-acid polypeptide reads, in one-letter code: Tagaturonate/fructuronate epimerase (481 aa).

Asp161 acts as the Proton acceptor in catalysis. His162 provides a ligand contact to a divalent metal cation. Glu266 serves as the catalytic Proton donor. A divalent metal cation contacts are provided by Lys308 and His341.

This sequence belongs to the UxaE family. The cofactor is a divalent metal cation.

The catalysed reaction is keto-D-tagaturonate = keto-D-fructuronate. Catalyzes the epimerization of D-tagaturonate (D-TagA) to D-fructuronate (D-FruA). The sequence is that of Tagaturonate/fructuronate epimerase from Thermotoga maritima (strain ATCC 43589 / DSM 3109 / JCM 10099 / NBRC 100826 / MSB8).